The following is a 381-amino-acid chain: Chaperone protein DnaJ (381 aa).

The 66-residue stretch at 5–70 (DYYEVLGCDR…QKRGAYDRYG (66 aa)) folds into the J domain. A CR-type zinc finger spans residues 136-214 (GKTAQISIPT…CGGAGRVTRE (79 aa)). Zn(2+) is bound by residues Cys-149, Cys-152, Cys-166, Cys-169, Cys-188, Cys-191, Cys-202, and Cys-205. CXXCXGXG motif repeat units follow at residues 149 to 156 (CEVCSGSG), 166 to 173 (CRTCNGAG), 188 to 195 (CPSCQGRG), and 202 to 209 (CPNCGGAG).

It belongs to the DnaJ family. Homodimer. It depends on Zn(2+) as a cofactor.

It is found in the cytoplasm. Functionally, participates actively in the response to hyperosmotic and heat shock by preventing the aggregation of stress-denatured proteins and by disaggregating proteins, also in an autonomous, DnaK-independent fashion. Unfolded proteins bind initially to DnaJ; upon interaction with the DnaJ-bound protein, DnaK hydrolyzes its bound ATP, resulting in the formation of a stable complex. GrpE releases ADP from DnaK; ATP binding to DnaK triggers the release of the substrate protein, thus completing the reaction cycle. Several rounds of ATP-dependent interactions between DnaJ, DnaK and GrpE are required for fully efficient folding. Also involved, together with DnaK and GrpE, in the DNA replication of plasmids through activation of initiation proteins. This Azorhizobium caulinodans (strain ATCC 43989 / DSM 5975 / JCM 20966 / LMG 6465 / NBRC 14845 / NCIMB 13405 / ORS 571) protein is Chaperone protein DnaJ.